The sequence spans 264 residues: Phycocyanobilin:ferredoxin oxidoreductase (264 aa).

The protein belongs to the HY2 family.

It catalyses the reaction (2R,3Z)-phycocyanobilin + 4 oxidized [2Fe-2S]-[ferredoxin] = biliverdin IXalpha + 4 reduced [2Fe-2S]-[ferredoxin] + 4 H(+). Its function is as follows. Catalyzes the four-electron reduction of biliverdin IX-alpha (2-electron reduction at both the A and D rings); the reaction proceeds via an isolatable 2-electron intermediate, 181,182-dihydrobiliverdin. In Prochlorococcus marinus (strain MIT 9303), this protein is Phycocyanobilin:ferredoxin oxidoreductase.